The chain runs to 111 residues: Large ribosomal subunit protein uL23 (111 aa).

Belongs to the universal ribosomal protein uL23 family. As to quaternary structure, part of the 50S ribosomal subunit. Contacts protein L29, and trigger factor when it is bound to the ribosome.

In terms of biological role, one of the early assembly proteins it binds 23S rRNA. One of the proteins that surrounds the polypeptide exit tunnel on the outside of the ribosome. Forms the main docking site for trigger factor binding to the ribosome. This chain is Large ribosomal subunit protein uL23, found in Nitrosospira multiformis (strain ATCC 25196 / NCIMB 11849 / C 71).